Here is a 596-residue protein sequence, read N- to C-terminus: Histone deacetylase 9 (596 aa).

Composition is skewed to basic and acidic residues over residues 132-153 (REKE…HRQE) and 160-172 (RSKD…AVAS). Disordered stretches follow at residues 132–172 (REKE…AVAS), 214–258 (HTSL…VRSR), 293–313 (SSVS…GPVA), and 522–596 (QPEG…QQVT). Residues 172-222 (STEVKQKLQEFILSKSATKEPLTNGTSHSMGRHPKLWYTAAHHTSLDQSSP) form an interaction with mef2 region. The segment covering 221–237 (SPPPSGTSPTYKCPPPG) has biased composition (pro residues). Positions 293–312 (SSVSSSSPVSGPSSPNNGPV) are enriched in low complexity. Residues 522–536 (QPEGHLEEAEEDLHG) are compositionally biased toward basic and acidic residues. The segment covering 541–558 (QEKSSSIDNTRSYSSTDL) has biased composition (polar residues). Over residues 567–585 (KVKEEPPDSENEIKTHLQS) the composition is skewed to basic and acidic residues. The span at 586 to 596 (EQKSVFAQQVT) shows a compositional bias: polar residues.

It belongs to the histone deacetylase family. HD type 2 subfamily. In terms of assembly, homodimer. Interacts with mef2. Broadly expressed.

The protein localises to the nucleus. It carries out the reaction N(6)-acetyl-L-lysyl-[histone] + H2O = L-lysyl-[histone] + acetate. Devoided of intrinsic deacetylase activity, promotes the deacetylation of lysine residues on the N-terminal part of the core histones (H2A, H2B, H3 and H4) by recruiting other histone deacetylases. Histone deacetylation gives a tag for epigenetic repression and plays an important role in transcriptional regulation, cell cycle progression and developmental events. Represses MEF2-dependent transcription. The sequence is that of Histone deacetylase 9 (hdac9) from Xenopus laevis (African clawed frog).